Here is a 344-residue protein sequence, read N- to C-terminus: Heat-inducible transcription repressor HrcA (344 aa).

It belongs to the HrcA family.

In terms of biological role, negative regulator of class I heat shock genes (grpE-dnaK-dnaJ and groELS operons). Prevents heat-shock induction of these operons. The protein is Heat-inducible transcription repressor HrcA of Streptococcus pneumoniae (strain P1031).